The primary structure comprises 310 residues: Porphobilinogen deaminase (310 aa).

The residue at position 241 (Cys-241) is an S-(dipyrrolylmethanemethyl)cysteine.

The protein belongs to the HMBS family. In terms of assembly, monomer. Dipyrromethane is required as a cofactor.

The enzyme catalyses 4 porphobilinogen + H2O = hydroxymethylbilane + 4 NH4(+). It participates in porphyrin-containing compound metabolism; protoporphyrin-IX biosynthesis; coproporphyrinogen-III from 5-aminolevulinate: step 2/4. In terms of biological role, tetrapolymerization of the monopyrrole PBG into the hydroxymethylbilane pre-uroporphyrinogen in several discrete steps. The sequence is that of Porphobilinogen deaminase from Pelobacter propionicus (strain DSM 2379 / NBRC 103807 / OttBd1).